The primary structure comprises 329 residues: 1-phosphatidylinositol phosphodiesterase (329 aa).

The signal sequence occupies residues 1-31 (MSNKKLILKLFICSTIFITFVFALHDKRVVA). The region spanning 51–194 (NIPLARISIP…ARGKIVLLKR (144 aa)) is the PI-PLC X-box domain. The Proton acceptor role is filled by His63. Residue His113 is the Proton donor of the active site.

Its subcellular location is the secreted. The enzyme catalyses a 1,2-diacyl-sn-glycero-3-phospho-(1D-myo-inositol) = 1D-myo-inositol 1,2-cyclic phosphate + a 1,2-diacyl-sn-glycerol. Functionally, cleaves glycosylphosphatidylinositol (GPI) and phosphatidylinositol (PI) anchors but not PI phosphates. This is 1-phosphatidylinositol phosphodiesterase from Bacillus thuringiensis.